A 326-amino-acid chain; its full sequence is Vomeronasal type-1 receptor 100 (326 aa).

Residues 1–32 (MSEFPFFSPQPLFSYMMNKNSRVHTDSNIRNT) lie on the Extracellular side of the membrane. Residues 33–53 (FFTEIGIGILANSFLLLFHIF) form a helical membrane-spanning segment. The Cytoplasmic segment spans residues 54 to 70 (KFIRGQRSRLTDLPIGL). Residues 71–91 (LSLIHLLMLLMGAFIAIDIFI) form a helical membrane-spanning segment. The Extracellular segment spans residues 92–104 (SWRGWDDIICKFL). Cys-101 and Cys-188 are disulfide-bonded. The chain crosses the membrane as a helical span at residues 105-127 (VYLYRSFRGLSLCTTCMLSVLQA). At 128–149 (ITLSPRSSCLAKFKHKSPHHVS) the chain is on the cytoplasmic side. The helical transmembrane segment at 150 to 170 (CAIISLSILYMFISSHLLVSI) threads the bilayer. Residues 171-209 (NATPNLTTNNFMQVTQSCYIIPLSYLMQSMFSTLLAIRD) are Extracellular-facing. Asn-175 is a glycosylation site (N-linked (GlcNAc...) asparagine). Residues 210-230 (ISLISLMVLSTCYMVVLLCRH) form a helical membrane-spanning segment. The Cytoplasmic portion of the chain corresponds to 231–254 (RNQIQHLQGTNLSPKASPEQRATQ). The helical transmembrane segment at 255 to 275 (TILMLMTFFVLMSIFDSIVSC) threads the bilayer. Residues 276–285 (SRTMYLNDPT) are Extracellular-facing. Residues 286-306 (SYYIQIFVVYIYATVSPFVFM) traverse the membrane as a helical segment. The Cytoplasmic portion of the chain corresponds to 307 to 326 (STEKHIVNFLKSMCVRVKNV).

Belongs to the G-protein coupled receptor 1 family. As to expression, expressed in 1-4% of neurons of the vomeronasal organ. Only one pheromone receptor gene may be expressed in a particular neuron. Not expressed in the main olfactory epithelium.

Its subcellular location is the cell membrane. Its function is as follows. Putative pheromone receptor implicated in the regulation of social as well as reproductive behavior. This Rattus norvegicus (Rat) protein is Vomeronasal type-1 receptor 100 (Vom1r100).